A 397-amino-acid chain; its full sequence is Phosphopentomutase (397 aa).

The Mn(2+) site is built by Asp12, Asp289, His294, Asp330, His331, and His342.

The protein belongs to the phosphopentomutase family. The cofactor is Mn(2+).

It is found in the cytoplasm. It carries out the reaction 2-deoxy-alpha-D-ribose 1-phosphate = 2-deoxy-D-ribose 5-phosphate. It catalyses the reaction alpha-D-ribose 1-phosphate = D-ribose 5-phosphate. It participates in carbohydrate degradation; 2-deoxy-D-ribose 1-phosphate degradation; D-glyceraldehyde 3-phosphate and acetaldehyde from 2-deoxy-alpha-D-ribose 1-phosphate: step 1/2. Isomerase that catalyzes the conversion of deoxy-ribose 1-phosphate (dRib-1-P) and ribose 1-phosphate (Rib-1-P) to deoxy-ribose 5-phosphate (dRib-5-P) and ribose 5-phosphate (Rib-5-P), respectively. This is Phosphopentomutase from Limosilactobacillus reuteri (strain DSM 20016) (Lactobacillus reuteri).